Reading from the N-terminus, the 209-residue chain is Glutathione S-transferase F7 (209 aa).

A GST N-terminal domain is found at 2 to 83 (AGIKVFGHPA…YIAHFYSDKG (82 aa)). Glutathione is bound by residues 12 to 13 (ST), 41 to 42 (HK), 54 to 55 (KV), and 67 to 68 (ES). In terms of domain architecture, GST C-terminal spans 90–209 (GSKDIAGIAM…TSRPSAKKVL (120 aa)).

This sequence belongs to the GST superfamily. Phi family.

The protein resides in the cytoplasm. The protein localises to the cytosol. It carries out the reaction RX + glutathione = an S-substituted glutathione + a halide anion + H(+). Functionally, may be involved in the conjugation of reduced glutathione to a wide number of exogenous and endogenous hydrophobic electrophiles and have a detoxification role against certain herbicides. This chain is Glutathione S-transferase F7, found in Arabidopsis thaliana (Mouse-ear cress).